A 414-amino-acid polypeptide reads, in one-letter code: Serine/threonine transporter SstT (414 aa).

The Cytoplasmic segment spans residues 2 to 15 (TTQRSPGLFRRLAH). The helical transmembrane segment at 16–36 (GSLVKQILVGLVLGILLAWIS) threads the bilayer. The Periplasmic segment spans residues 37–45 (KPAAEAVGL). A helical transmembrane segment spans residues 46 to 66 (LGTLFVGALKAVAPILVLMLV). Residues 67–83 (MASIANHQHGQKTNIRP) lie on the Cytoplasmic side of the membrane. Residues 84–104 (ILFLYLLGTFSAALAAVVFSF) traverse the membrane as a helical segment. At 105 to 142 (AFPSTLHLSSSAGDISPPSGIVEVMRGLVMSMVSNPID) the chain is on the periplasmic side. Residues 143 to 163 (ALLKGNYIGILVWAIGLGFAL) form a helical membrane-spanning segment. Residues 164–179 (RHGNETTKNLVNDMSN) lie on the Cytoplasmic side of the membrane. Residues 180 to 200 (AVTFMVKLVIRFAPFGIFGLV) form a helical membrane-spanning segment. Residues 201–217 (SSTLATTGFSTLWGYAQ) lie on the Periplasmic side of the membrane. The chain crosses the membrane as a helical span at residues 218-238 (LLVVLVGCMLLVALVVNPLLV). Over 239–299 (WWKIRRNPFP…VSIPLGATIN (61 aa)) the chain is Cytoplasmic. The chain crosses the membrane as a helical span at residues 300-320 (MAGAAITITVLTLAAVNTLGI). Residues 321–331 (PVDLPTALLLS) lie on the Periplasmic side of the membrane. Residues 332–352 (VVASLCACGASGVAGGSLLLI) traverse the membrane as a helical segment. Over 353–414 (PLACNMFGIS…DRLANSALRN (62 aa)) the chain is Cytoplasmic.

This sequence belongs to the dicarboxylate/amino acid:cation symporter (DAACS) (TC 2.A.23) family.

It localises to the cell inner membrane. The enzyme catalyses L-serine(in) + Na(+)(in) = L-serine(out) + Na(+)(out). It catalyses the reaction L-threonine(in) + Na(+)(in) = L-threonine(out) + Na(+)(out). Its function is as follows. Involved in the import of serine and threonine into the cell, with the concomitant import of sodium (symport system). This is Serine/threonine transporter SstT from Shigella flexneri.